A 306-amino-acid polypeptide reads, in one-letter code: Curved DNA-binding protein (306 aa).

Residues Asp-5–Trp-69 enclose the J domain.

The protein resides in the cytoplasm. It localises to the nucleoid. Functionally, DNA-binding protein that preferentially recognizes a curved DNA sequence. It is probably a functional analog of DnaJ; displays overlapping activities with DnaJ, but functions under different conditions, probably acting as a molecular chaperone in an adaptive response to environmental stresses other than heat shock. Lacks autonomous chaperone activity; binds native substrates and targets them for recognition by DnaK. Its activity is inhibited by the binding of CbpM. This chain is Curved DNA-binding protein, found in Escherichia coli (strain 55989 / EAEC).